A 478-amino-acid polypeptide reads, in one-letter code: DNA gyrase subunit B (478 aa).

The Toprim domain occupies 319–438 (CELYLVEGDS…GGHVYIAQPP (120 aa)). Positions 325, 403, and 405 each coordinate Mg(2+).

This sequence belongs to the type II topoisomerase GyrB family. Heterotetramer, composed of two GyrA and two GyrB chains. In the heterotetramer, GyrA contains the active site tyrosine that forms a transient covalent intermediate with DNA, while GyrB binds cofactors and catalyzes ATP hydrolysis. It depends on Mg(2+) as a cofactor. Mn(2+) serves as cofactor. The cofactor is Ca(2+).

Its subcellular location is the cytoplasm. The enzyme catalyses ATP-dependent breakage, passage and rejoining of double-stranded DNA.. Functionally, a type II topoisomerase that negatively supercoils closed circular double-stranded (ds) DNA in an ATP-dependent manner to modulate DNA topology and maintain chromosomes in an underwound state. Negative supercoiling favors strand separation, and DNA replication, transcription, recombination and repair, all of which involve strand separation. Also able to catalyze the interconversion of other topological isomers of dsDNA rings, including catenanes and knotted rings. Type II topoisomerases break and join 2 DNA strands simultaneously in an ATP-dependent manner. The chain is DNA gyrase subunit B (gyrB) from Cytophaga hutchinsonii.